The following is a 117-amino-acid chain: Large ribosomal subunit protein uL18 (117 aa).

The protein belongs to the universal ribosomal protein uL18 family. Part of the 50S ribosomal subunit; part of the 5S rRNA/L5/L18/L25 subcomplex. Contacts the 5S and 23S rRNAs.

Functionally, this is one of the proteins that bind and probably mediate the attachment of the 5S RNA into the large ribosomal subunit, where it forms part of the central protuberance. The polypeptide is Large ribosomal subunit protein uL18 (Proteus mirabilis (strain HI4320)).